Consider the following 159-residue polypeptide: ATP synthase subunit b' (159 aa).

The helical transmembrane segment at 27 to 47 (ATLPLMAVQFLILTVILNALL) threads the bilayer.

It belongs to the ATPase B chain family. In terms of assembly, F-type ATPases have 2 components, F(1) - the catalytic core - and F(0) - the membrane proton channel. F(1) has five subunits: alpha(3), beta(3), gamma(1), delta(1), epsilon(1). F(0) has four main subunits: a(1), b(1), b'(1) and c(10-14). The alpha and beta chains form an alternating ring which encloses part of the gamma chain. F(1) is attached to F(0) by a central stalk formed by the gamma and epsilon chains, while a peripheral stalk is formed by the delta, b and b' chains.

It is found in the cellular thylakoid membrane. Functionally, f(1)F(0) ATP synthase produces ATP from ADP in the presence of a proton or sodium gradient. F-type ATPases consist of two structural domains, F(1) containing the extramembraneous catalytic core and F(0) containing the membrane proton channel, linked together by a central stalk and a peripheral stalk. During catalysis, ATP synthesis in the catalytic domain of F(1) is coupled via a rotary mechanism of the central stalk subunits to proton translocation. Component of the F(0) channel, it forms part of the peripheral stalk, linking F(1) to F(0). The b'-subunit is a diverged and duplicated form of b found in plants and photosynthetic bacteria. The polypeptide is ATP synthase subunit b' (Synechococcus sp. (strain PCC 6716)).